The chain runs to 207 residues: Ribosomal RNA small subunit methyltransferase G (207 aa).

Residues glycine 74, phenylalanine 79, 124-125, and arginine 138 contribute to the S-adenosyl-L-methionine site; that span reads VE.

Belongs to the methyltransferase superfamily. RNA methyltransferase RsmG family.

Its subcellular location is the cytoplasm. It catalyses the reaction guanosine(527) in 16S rRNA + S-adenosyl-L-methionine = N(7)-methylguanosine(527) in 16S rRNA + S-adenosyl-L-homocysteine. In terms of biological role, specifically methylates the N7 position of guanine in position 527 of 16S rRNA. This chain is Ribosomal RNA small subunit methyltransferase G, found in Hyphomonas neptunium (strain ATCC 15444).